Consider the following 572-residue polypeptide: MRLSQFWLVTKKESPAEAEVISHQLMLRAGMIRQTAVGIYSWLPLGLRVLNKVSAIIREEMDRAGALEVVMPAAQPAELWQESGRWHAYGPELQRFIDRHQRDYCIGPTHEEVVTDLVRRDLSSYKQLPVNLYQIQTKFRDEIRPRFGVMRGREFVMKDGYSFDLDVAGMKNSYQKMYDAYCRIFDRLGLNYRPVIADNGAIGGTGSHEFHVLAETGEDSIAFSNASDYAANIEKAEALPPTKPRPAPSLEMEKRATPDCKTIAQLVERYQLPIEKTLKTLLVEGADGGIVALVLRGDHELNTIKAEQLPEVAKPFSLAEESKVRGLMGAGFGSLGPVGLKALSVPVIVDHSAAICADFVVGANEDGYHYFNVNWERDAEITRTADIRNVVEGDPSPDGQGTLLIRRGIEVGHVFQLGEKYSKAMNLTVPLEDGTLCTPLMGCYGIGVTRVIAAAIEQNHDENGIIWSKELAPFSVAILPINADKSEAVRDAAEALYQKFLQAGVDVVLDDRNRRAGVMFADIDLIGIPARIVISDKTLATGSVEFKRRNEQETFHISLEEIVAQFCAEEKH.

The protein belongs to the class-II aminoacyl-tRNA synthetase family. ProS type 1 subfamily. Homodimer.

The protein resides in the cytoplasm. The catalysed reaction is tRNA(Pro) + L-proline + ATP = L-prolyl-tRNA(Pro) + AMP + diphosphate. In terms of biological role, catalyzes the attachment of proline to tRNA(Pro) in a two-step reaction: proline is first activated by ATP to form Pro-AMP and then transferred to the acceptor end of tRNA(Pro). As ProRS can inadvertently accommodate and process non-cognate amino acids such as alanine and cysteine, to avoid such errors it has two additional distinct editing activities against alanine. One activity is designated as 'pretransfer' editing and involves the tRNA(Pro)-independent hydrolysis of activated Ala-AMP. The other activity is designated 'posttransfer' editing and involves deacylation of mischarged Ala-tRNA(Pro). The misacylated Cys-tRNA(Pro) is not edited by ProRS. This chain is Proline--tRNA ligase, found in Dichelobacter nodosus (strain VCS1703A).